We begin with the raw amino-acid sequence, 42 residues long: Photosystem II reaction center protein J (42 aa).

Residues 10-30 (IPLWIIGTLAGTLVIGLLAIF) form a helical membrane-spanning segment.

Belongs to the PsbJ family. As to quaternary structure, PSII is composed of 1 copy each of membrane proteins PsbA, PsbB, PsbC, PsbD, PsbE, PsbF, PsbH, PsbI, PsbJ, PsbK, PsbL, PsbM, PsbT, PsbX, PsbY, PsbZ, Psb30/Ycf12, at least 3 peripheral proteins of the oxygen-evolving complex and a large number of cofactors. It forms dimeric complexes.

It is found in the plastid. It localises to the chloroplast thylakoid membrane. In terms of biological role, one of the components of the core complex of photosystem II (PSII). PSII is a light-driven water:plastoquinone oxidoreductase that uses light energy to abstract electrons from H(2)O, generating O(2) and a proton gradient subsequently used for ATP formation. It consists of a core antenna complex that captures photons, and an electron transfer chain that converts photonic excitation into a charge separation. The chain is Photosystem II reaction center protein J from Chaetosphaeridium globosum (Charophycean green alga).